A 262-amino-acid chain; its full sequence is Indole-3-glycerol phosphate synthase (262 aa).

The protein belongs to the TrpC family.

The enzyme catalyses 1-(2-carboxyphenylamino)-1-deoxy-D-ribulose 5-phosphate + H(+) = (1S,2R)-1-C-(indol-3-yl)glycerol 3-phosphate + CO2 + H2O. The protein operates within amino-acid biosynthesis; L-tryptophan biosynthesis; L-tryptophan from chorismate: step 4/5. This is Indole-3-glycerol phosphate synthase from Dechloromonas aromatica (strain RCB).